The primary structure comprises 148 residues: Universal stress protein YxiE (148 aa).

The N-terminal stretch at 1–18 is a signal peptide; that stretch reads MFNKMLVAIDGSDMSAKA.

The protein belongs to the universal stress protein A family.

In Bacillus subtilis (strain 168), this protein is Universal stress protein YxiE (yxiE).